The following is a 1083-amino-acid chain: Histone-lysine N-methyltransferase ATX2 (1083 aa).

A Nuclear localization signal motif is present at residues 77 to 84; it reads HRRPEIVH. Positions 315–379 constitute a PWWP domain; it reads PRDIIWAKLT…VKQAVSFLKG (65 aa). Residues 422-443 form a disordered region; it reads TDCSERINSGEEDSSNSGDDYT. The 60-residue stretch at 457–516 folds into the FYR N-terminal domain; the sequence is DCLHRIGDLQIINLGRIVTDSEFFKDSKHTWPEGYTATRKFISLKDPNASAMYKMEVLRD. An FYR C-terminal domain is found at 520–604; that stretch reads KTRPVFRVTT…PPSKVSQRKY (85 aa). The PHD-type 1 zinc-finger motif lies at 626–677; that stretch reads LDKCNVCHMDEEYENNLFLQCDKCRMMVHTRCYGQLEPHNGILWLCNLCRPV. A C2HC pre-PHD-type zinc finger spans residues 682-715; that stretch reads PPRCCLCPVVGGAMKPTTDGRWAHLACAIWIPET. The extended PHD domain (ePHD) stretch occupies residues 682-807; that stretch reads PPRCCLCPVV…RLLSFCKRHR (126 aa). A PHD-type 2 zinc finger spans residues 739–807; that stretch reads LLCSICGVSY…RLLSFCKRHR (69 aa). Positions 919-1037 constitute an SET domain; that stretch reads KRLAFGKSGI…KWEELTYDYR (119 aa). An S-adenosyl-L-methionine-binding site is contributed by H929. The O-linked (GlcNAc) serine glycan is linked to S968. S-adenosyl-L-methionine contacts are provided by residues Y975 and 998-999; that span reads NH. Residue C1001 participates in Zn(2+) binding. Y1036 provides a ligand contact to S-adenosyl-L-methionine. The 17-residue stretch at 1043–1059 folds into the Post-SET domain; sequence ERLACYCGFPRCRGVVN. Residues C1047, C1049, and C1054 each contribute to the Zn(2+) site.

Belongs to the class V-like SAM-binding methyltransferase superfamily. Histone-lysine methyltransferase family. TRX/MLL subfamily. Activated via O-glycosylation. Expressed in roots, leaves and flowers and, to a lower extent, in young seedlings.

Its subcellular location is the nucleus. It carries out the reaction N(6)-methyl-L-lysyl-[histone] + S-adenosyl-L-methionine = N(6),N(6)-dimethyl-L-lysyl-[histone] + S-adenosyl-L-homocysteine + H(+). Its function is as follows. Histone methyltransferase. Dimethylates 'Lys-4' of histone H3 (H3K4me2). H3 'Lys-4' methylation represents a specific tag for epigenetic transcriptional activation. Methylates only a limited fraction of nucleosomes of target genes (e.g. NAP and XTH33). Involved in epigenetic regulation of the floral repressor FLC and FT to prevent the transition from vegetative to reproductive development. This chain is Histone-lysine N-methyltransferase ATX2, found in Arabidopsis thaliana (Mouse-ear cress).